The primary structure comprises 160 residues: Transcriptional repressor NrdR (160 aa).

A zinc finger spans residues 3–34 (CPFCGAEDTSVVDSRVSEEGSRIRRRRQCTAC). Residues 49-139 (PQIIKQGGNR…VYRSFEDVGD (91 aa)) enclose the ATP-cone domain.

It belongs to the NrdR family. Requires Zn(2+) as cofactor.

In terms of biological role, negatively regulates transcription of bacterial ribonucleotide reductase nrd genes and operons by binding to NrdR-boxes. This Nitrosomonas eutropha (strain DSM 101675 / C91 / Nm57) protein is Transcriptional repressor NrdR.